Reading from the N-terminus, the 696-residue chain is Polyribonucleotide nucleotidyltransferase (696 aa).

Aspartate 483 and aspartate 489 together coordinate Mg(2+). The KH domain maps to 550-609 (PRITTIWVKVDKIRDVIGSGGKNIRSVTEATGVSIDIDDTGKINIASTNKEACDLAIKMI). An S1 motif domain is found at 619 to 687 (GKLYMGTVKK…KQGKIKLSRK (69 aa)).

Belongs to the polyribonucleotide nucleotidyltransferase family. Requires Mg(2+) as cofactor.

The protein resides in the cytoplasm. It catalyses the reaction RNA(n+1) + phosphate = RNA(n) + a ribonucleoside 5'-diphosphate. Functionally, involved in mRNA degradation. Catalyzes the phosphorolysis of single-stranded polyribonucleotides processively in the 3'- to 5'-direction. In Citrifermentans bemidjiense (strain ATCC BAA-1014 / DSM 16622 / JCM 12645 / Bem) (Geobacter bemidjiensis), this protein is Polyribonucleotide nucleotidyltransferase.